A 515-amino-acid polypeptide reads, in one-letter code: Iroquois-class homeodomain protein IRX-4 (515 aa).

A DNA-binding region (homeobox; TALE-type) is located at residues 144–205 (GTRRKNATRE…NARRRLKKEN (62 aa)). 3 disordered regions span residues 205–258 (NKMT…ELEL), 278–307 (TPFQSLDSGPERIPASSDGPGTGKEASTTL), and 398–425 (GPTGVSATTPASSPAVTAPSGALDRHQD). Basic and acidic residues predominate over residues 214-223 (KCADEKRPYG). The span at 224–236 (EGEEEEAGEEESR) shows a compositional bias: acidic residues. A compositionally biased stretch (basic and acidic residues) spans 237-257 (EEPLKSAKSEGHAGKDDKELE). Positions 399 to 419 (PTGVSATTPASSPAVTAPSGA) are enriched in low complexity.

Belongs to the TALE/IRO homeobox family. In terms of assembly, interacts with the vitamin D receptor VDR but doesn't affect its transactivation activity. In terms of tissue distribution, expressed in the developing central nervous system, skin, and vibrissae, but predominantly expressed in the cardiac ventricles of the developing heart. Not expressed in the developing metanephric kidney or adult kidney.

The protein localises to the nucleus. Functionally, likely to be an important mediator of ventricular differentiation during cardiac development. The polypeptide is Iroquois-class homeodomain protein IRX-4 (Irx4) (Mus musculus (Mouse)).